The following is a 130-amino-acid chain: uncharacterized protein (130 aa).

Residues 76–102 are disordered; sequence RKCKNGPSPNKRGSASGCSRRGGGRGS.

This is an uncharacterized protein from Saccharomyces cerevisiae (strain ATCC 204508 / S288c) (Baker's yeast).